A 355-amino-acid chain; its full sequence is Epoxide hydrolase 2 (355 aa).

The region spanning 78–323 (VLLMVHGFPE…IRGASHWVQQ (246 aa)) is the AB hydrolase-1 domain. The active-site Nucleophile is aspartate 152. The active-site Proton donor is the tyrosine 263. Catalysis depends on histidine 319, which acts as the Proton acceptor.

It belongs to the AB hydrolase superfamily. Epoxide hydrolase family.

The enzyme catalyses an epoxide + H2O = an ethanediol. Its pathway is lipid metabolism. Its function is as follows. Catalyzes the hydrolysis of epoxide-containing fatty acids. Active in vitro against trans-1,3-diphenylpropene oxide (t-DPPO), epoxyeicosatrienoic acids (EETs) including 8,9-EET, 11,12-EET and 14,15-EET and the linoleic acid metabolites 12,13-epoxy-9-octadecenoate (12,13-EpOME) and 9,10-epoxy-12-octadecenoate (9,10-EpOME). The protein is Epoxide hydrolase 2 of Caenorhabditis elegans.